The primary structure comprises 695 residues: NADPH--cytochrome P450 reductase (695 aa).

Residues 1–8 (MAQLDTLD) are Lumenal-facing. A helical transmembrane segment spans residues 9–31 (VVVLAVLLAGSIAYFTKGTFWAV). The Cytoplasmic portion of the chain corresponds to 32–695 (AKDPYASSGP…SGSYQEDVWS (664 aa)). A Flavodoxin-like domain is found at 66–221 (CVIFYGSQTG…DFLAWKEPMW (156 aa)). FMN is bound by residues 72 to 77 (SQTGTA), 123 to 126 (ATYG), 169 to 178 (LGNNTYEHYN), and aspartate 204. The FAD-binding FR-type domain maps to 277 to 538 (HNPYIAPIVE…HVRHSNFKLP (262 aa)). Arginine 296 provides a ligand contact to NADP(+). FAD-binding positions include 451–454 (RYYS), 469–471 (TAV), and 486–489 (GVTT). Residues 497–516 (QKQNGDPSPDPHGQTYAING) are disordered. Residues threonine 552, 614–615 (SR), 620–624 (KVYVQ), and glutamate 656 each bind NADP(+). Tryptophan 694 serves as a coordination point for FAD.

Belongs to the NADPH--cytochrome P450 reductase family. This sequence in the N-terminal section; belongs to the flavodoxin family. The protein in the C-terminal section; belongs to the flavoprotein pyridine nucleotide cytochrome reductase family. It depends on FAD as a cofactor. FMN serves as cofactor.

The protein localises to the endoplasmic reticulum membrane. Its subcellular location is the mitochondrion outer membrane. The protein resides in the cell membrane. The enzyme catalyses 2 oxidized [cytochrome P450] + NADPH = 2 reduced [cytochrome P450] + NADP(+) + H(+). In terms of biological role, this enzyme is required for electron transfer from NADP to cytochrome P450 in microsomes. It can also provide electron transfer to heme oxygenase and cytochrome B5. Involved in ergosterol biosynthesis. This is NADPH--cytochrome P450 reductase from Emericella nidulans (strain FGSC A4 / ATCC 38163 / CBS 112.46 / NRRL 194 / M139) (Aspergillus nidulans).